We begin with the raw amino-acid sequence, 29 residues long: Putative membrane protein PmrR (29 aa).

The helical transmembrane segment at 5–27 threads the bilayer; it reads VYESLTTVFSVLVVSSFLYIWFA.

The protein localises to the cell inner membrane. Functionally, may bind to BasS and modulate its sensor kinase activity. This chain is Putative membrane protein PmrR (pmrR), found in Escherichia coli (strain K12).